A 994-amino-acid polypeptide reads, in one-letter code: Alpha-mannosidase F (994 aa).

The N-terminal stretch at Met-1–Ser-20 is a signal peptide. Residues His-35, Asp-37, and Asp-151 each coordinate Zn(2+). Asp-151 serves as the catalytic Nucleophile. Asn-247 and Asn-381 each carry an N-linked (GlcNAc...) asparagine glycan. His-392 serves as a coordination point for Zn(2+). Asn-554, Asn-712, and Asn-932 each carry an N-linked (GlcNAc...) asparagine glycan.

This sequence belongs to the glycosyl hydrolase 38 family. Zn(2+) is required as a cofactor.

It localises to the secreted. It catalyses the reaction Hydrolysis of terminal, non-reducing alpha-D-mannose residues in alpha-D-mannosides.. This Dictyostelium discoideum (Social amoeba) protein is Alpha-mannosidase F (manF).